The chain runs to 434 residues: [Pyruvate dehydrogenase (acetyl-transferring)] kinase isozyme 1, mitochondrial (434 aa).

The transit peptide at 1-26 (MRLARLLRGGTSVRPLCAVPCASRSL) directs the protein to the mitochondrion. Y136 is modified (phosphotyrosine; by FGFR1). The Histidine kinase domain occupies 161–391 (TEYKESFGVD…DAVIYIKALS (231 aa)). Y241 bears the Phosphotyrosine; by FGFR1, ABL1, FLT3 and JAK2 mark. Y242 carries the post-translational modification Phosphotyrosine; by FGFR1. ATP is bound by residues 277–284 (ELFKNAMR), D316, 335–336 (ST), and 352–357 (GFGYGL). T336 carries the phosphothreonine modification. K403 carries the post-translational modification N6-succinyllysine.

The protein belongs to the PDK/BCKDK protein kinase family. Homodimer, and heterodimer with PDK2. Interacts with the pyruvate dehydrogenase complex subunit DLAT, and is part of the multimeric pyruvate dehydrogenase complex that contains multiple copies of pyruvate dehydrogenase (E1), dihydrolipoamide acetyltransferase (DLAT, E2) and lipoamide dehydrogenase (DLD, E3). Interacts with phosphoglycerate kinase PGK1; the interaction is direct, occurs under hypoxic conditions and leads to PDK1-mediated inhibition of pyruvate dehydrogenase complex activity. Phosphorylated by constitutively activated ABL1, FGFR1, FLT3 and JAK2 (in vitro), and this may also occur in cancer cells that express constitutively activated ABL1, FGFR1, FLT3 and JAK2. Phosphorylation at Tyr-241 and Tyr-242 strongly increases kinase activity, while phosphorylation at Tyr-136 has a lesser effect. Phosphorylated under hypoxic conditions at Thr-336 by phosphoglycerate kinase PGK1 which has an activating effect.

Its subcellular location is the mitochondrion matrix. It catalyses the reaction L-seryl-[pyruvate dehydrogenase E1 alpha subunit] + ATP = O-phospho-L-seryl-[pyruvate dehydrogenase E1 alpha subunit] + ADP + H(+). Its function is as follows. Kinase that plays a key role in regulation of glucose and fatty acid metabolism and homeostasis via phosphorylation of the pyruvate dehydrogenase subunits PDHA1 and PDHA2. This inhibits pyruvate dehydrogenase activity, and thereby regulates metabolite flux through the tricarboxylic acid cycle, down-regulates aerobic respiration and inhibits the formation of acetyl-coenzyme A from pyruvate. Plays an important role in cellular responses to hypoxia and is important for cell proliferation under hypoxia. The chain is [Pyruvate dehydrogenase (acetyl-transferring)] kinase isozyme 1, mitochondrial (Pdk1) from Mus musculus (Mouse).